Consider the following 376-residue polypeptide: Putative F-box protein At1g53370 (376 aa).

The F-box domain maps to 22–71 (RNYIDSIPVDLLIDILSRFPPKSIARFYCVSKLWESILRGPDFTELYLTK).

This chain is Putative F-box protein At1g53370, found in Arabidopsis thaliana (Mouse-ear cress).